The sequence spans 235 residues: MGMAAAGGYGRVLWLHGSGQTGEESRAQVAPYFAAPELASVRFSFPTAPTSSIPCYGGEVITAWFAIPEVPITARTARDEKEVLKAVERVHEMLDGEVAAGTSPSNIFVCGLSQGGALAIASVLLYPMTLGGCVVFSGSLPLSKTFAESIPSEARKTPVLWFHGMADGVVLFEAGHAGCAFLQEIGMHCEFKAYPALGHTLVDEELQYFRQWIKDRLSQGTGVPVPSLSDKMDLQ.

Active-site charge relay system residues include S113, D167, and H199.

Belongs to the AB hydrolase superfamily. AB hydrolase 2 family.

Functionally, possesses carboxylesterase activity in vitro. This is Probable carboxylesterase Os04g0669600 from Oryza sativa subsp. japonica (Rice).